A 238-amino-acid chain; its full sequence is Large ribosomal subunit protein uL2 (238 aa).

A disordered region spans residues 198-238; sequence NHPHGGGSHQSPSFPTTVSRNAPPGRKVGHIAARSTGRRKR. Polar residues predominate over residues 206–217; it reads HQSPSFPTTVSR.

The protein belongs to the universal ribosomal protein uL2 family. In terms of assembly, part of the 50S ribosomal subunit. Forms a bridge to the 30S subunit in the 70S ribosome.

In terms of biological role, one of the primary rRNA binding proteins. Required for association of the 30S and 50S subunits to form the 70S ribosome, for tRNA binding and peptide bond formation. It has been suggested to have peptidyltransferase activity; this is somewhat controversial. Makes several contacts with the 16S rRNA in the 70S ribosome. This is Large ribosomal subunit protein uL2 from Hyperthermus butylicus (strain DSM 5456 / JCM 9403 / PLM1-5).